An 848-amino-acid polypeptide reads, in one-letter code: MNESKGAVDSGLMSGKTERTTLKLSDKLKLSSSIQQNTKFALNKSITTVEVRKSKKRRDIDNIEQASVVLQNDNVYQSDGDNNTLTIQEQISRMNALQNANIHEKKEEVSDDQTDKKEEVTNAETVGLLPVEENVNTDLVIEEGHSEKVEEVIEESVIEDQPNLEHLDVIEEKNGPNQSGDQNVDNSIVDLLQSKAVEEKKLKKYEKEHEEKKGNPKKGVSNHMYSKHVKLVIEEELEDNNKQIIQTHKTRKNRSVSSIKNKITRKVLIPKKITVQELASNMSERVKDVQNMLFQMGRRDIKPNDFLDSDQAAIIVEAFNHTFKLVNDGKLEDDLYSDGNDKELLPRAPVVTVMGHVDHGKTSLLDAIRESNVADGEFKGITQHIGAYQIILDGDKRITFIDTPGHEAFTAMRACGTNVTDIVVLVVAADDGIMPQTIESINHVKAANVAMIVAVNKIDKHDANLDKITNSLLNHGVVAESLGGDVIVVPVSAKEKINLDQLKSSILLMAELLELKAIYNTRASGVVIESKIDKNCGVVATLIVQKGTLKSGDIIVVGHNSYGKVRNMFNSDGRSQKVAIPSMPVKVLGLNNVPNSGSSFIVVDSEKQARELINYRQELFNASLEENAKSKMDASNILACDVVDELNVILKCDVMGSVEAICYSISKITHEDIKLNVLYKGVGNVTKSDVLLAETSNSIILAFNVKADAQVKELAKQRCVEINHYSVIYDIIDDVKRILSSMLKPLQQEVQVGALAIRKVFSSGNAGSVLGCYVTSGVVKKGSLVKLIRNNTIIHEGKIKVLRRFKDDVKEVSSGFECGILLDYSKEIYPESDIINVLEVIEEVRVIK.

The segment at 1–20 is disordered; that stretch reads MNESKGAVDSGLMSGKTERT. One can recognise a tr-type G domain in the interval 346 to 516; the sequence is PRAPVVTVMG…LLMAELLELK (171 aa). The G1 stretch occupies residues 355 to 362; that stretch reads GHVDHGKT. A GTP-binding site is contributed by 355–362; it reads GHVDHGKT. Residues 380 to 384 are G2; that stretch reads GITQH. Residues 402 to 405 form a G3 region; it reads DTPG. GTP contacts are provided by residues 402–406 and 456–459; these read DTPGH and NKID. Positions 456 to 459 are G4; the sequence is NKID. Positions 492–494 are G5; that stretch reads SAK.

It belongs to the TRAFAC class translation factor GTPase superfamily. Classic translation factor GTPase family. IF-2 subfamily.

It is found in the cytoplasm. Its function is as follows. One of the essential components for the initiation of protein synthesis. Protects formylmethionyl-tRNA from spontaneous hydrolysis and promotes its binding to the 30S ribosomal subunits. Also involved in the hydrolysis of GTP during the formation of the 70S ribosomal complex. The sequence is that of Translation initiation factor IF-2 from Ehrlichia canis (strain Jake).